Here is a 454-residue protein sequence, read N- to C-terminus: Cysteine--tRNA ligase (454 aa).

Cys27 is a binding site for Zn(2+). A 'HIGH' region motif is present at residues Pro29–His39. The Zn(2+) site is built by Asp207, His232, and Glu236. The short motif at Lys265–Ser269 is the 'KMSKS' region element. Lys268 contacts ATP.

This sequence belongs to the class-I aminoacyl-tRNA synthetase family. Zn(2+) serves as cofactor.

The protein localises to the cytoplasm. It catalyses the reaction tRNA(Cys) + L-cysteine + ATP = L-cysteinyl-tRNA(Cys) + AMP + diphosphate. This is Cysteine--tRNA ligase from Thermoplasma volcanium (strain ATCC 51530 / DSM 4299 / JCM 9571 / NBRC 15438 / GSS1).